Reading from the N-terminus, the 220-residue chain is Pyrrolidone-carboxylate peptidase 1 (220 aa).

Active-site residues include Glu80, Cys143, and His172.

The protein belongs to the peptidase C15 family. As to quaternary structure, homotetramer.

The protein resides in the cytoplasm. It carries out the reaction Release of an N-terminal pyroglutamyl group from a polypeptide, the second amino acid generally not being Pro.. Functionally, removes 5-oxoproline from various penultimate amino acid residues except L-proline. The polypeptide is Pyrrolidone-carboxylate peptidase 1 (Photorhabdus laumondii subsp. laumondii (strain DSM 15139 / CIP 105565 / TT01) (Photorhabdus luminescens subsp. laumondii)).